Consider the following 314-residue polypeptide: UPF0761 membrane protein VIBHAR_00593 (314 aa).

The next 6 helical transmembrane spans lie at 41–61, 104–124, 143–163, 185–205, 217–237, and 249–269; these read YLAY…LSIL, MTAV…SNID, FSMY…SIAV, FLRW…YFLV, IGAA…AFYI, and ALAA…IVLI.

Belongs to the UPF0761 family.

It is found in the cell inner membrane. The chain is UPF0761 membrane protein VIBHAR_00593 from Vibrio campbellii (strain ATCC BAA-1116).